Consider the following 1178-residue polypeptide: Pyruvate carboxylase, mitochondrial (1178 aa).

The transit peptide at 1 to 20 (MLKFQTVRGGLRLLGVRRSS) directs the protein to the mitochondrion. N6-acetyllysine is present on residues K35 and K39. In terms of domain architecture, Biotin carboxylation spans 36 to 486 (PIKKVMVANR…DTQFIDENPE (451 aa)). K79 carries the post-translational modification N6-acetyllysine; alternate. Position 79 is an N6-succinyllysine; alternate (K79). An N6-acetyllysine mark is found at K148 and K152. Residues K152 and E236 each coordinate ATP. The ATP-grasp domain maps to 156 to 353 (RAIAIAAGVP…LVHAQIHVSE (198 aa)). K241 carries the post-translational modification N6-acetyllysine. H271 serves as a coordination point for ATP. N6-acetyllysine is present on residues K297, K316, and K319. Residue R328 is part of the active site. An N6-acetyllysine modification is found at K434. K442 carries the post-translational modification N6-succinyllysine. Residues 563–832 (LLLMDTTFRD…DTEVPLERVF (270 aa)) enclose the Pyruvate carboxyltransferase domain. 571 to 575 (RDAHQ) provides a ligand contact to substrate. A Mn(2+)-binding site is contributed by D572. K589 carries the post-translational modification N6-acetyllysine. Substrate is bound at residue R644. N6-acetyllysine is present on residues K661 and K717. K741 is a binding site for Mn(2+). N6-carboxylysine is present on K741. K748 bears the N6-acetyllysine mark. Mn(2+)-binding residues include H771 and H773. K892 is subject to N6-acetyllysine. Residue T908 participates in substrate binding. An N6-acetyllysine modification is found at K969. K988 bears the N6-acetyllysine; alternate mark. At K988 the chain carries N6-succinyllysine; alternate. N6-acetyllysine is present on K992. At T1003 the chain carries Phosphothreonine. N6-acetyllysine occurs at positions 1061, 1090, and 1124. Residues 1109–1178 (KGQIGAPMPG…EGDDLILEIE (70 aa)) enclose the Biotinyl-binding domain. N6-biotinyllysine is present on K1144.

Homotetramer. Interacts (via the biotin carboxylation domain) with SIRT4. Biotin serves as cofactor. The cofactor is Mn(2+). In terms of processing, acetylation of Lys-748 might play a role in catalytic activity regulation.

It localises to the mitochondrion matrix. It carries out the reaction hydrogencarbonate + pyruvate + ATP = oxaloacetate + ADP + phosphate + H(+). It functions in the pathway carbohydrate biosynthesis; gluconeogenesis. Its function is as follows. Pyruvate carboxylase catalyzes a 2-step reaction, involving the ATP-dependent carboxylation of the covalently attached biotin in the first step and the transfer of the carboxyl group to pyruvate in the second. Catalyzes in a tissue specific manner, the initial reactions of glucose (liver, kidney) and lipid (adipose tissue, liver, brain) synthesis from pyruvate. This chain is Pyruvate carboxylase, mitochondrial (Pc), found in Rattus norvegicus (Rat).